A 163-amino-acid polypeptide reads, in one-letter code: Bacterial microcompartment assembly protein PduM (163 aa).

This sequence belongs to the PduM family. In terms of assembly, interacts with shell protein PduK.

It is found in the bacterial microcompartment. It functions in the pathway polyol metabolism; 1,2-propanediol degradation. In terms of biological role, plays an essential role in assembly and/or stability of the bacterial microcompartment (BMC) dedicated to 1,2-propanediol (1,2-PD) degradation. Overexpression impairs BMC formation. Its function is as follows. The 1,2-PD-specific bacterial microcompartment (BMC) concentrates low levels of 1,2-PD catabolic enzymes, concentrates volatile reaction intermediates thus enhancing pathway flux and keeps the level of toxic, mutagenic propionaldehyde low. The sequence is that of Bacterial microcompartment assembly protein PduM from Salmonella typhimurium (strain LT2 / SGSC1412 / ATCC 700720).